The sequence spans 170 residues: Translation machinery-associated protein 16 homolog (170 aa).

The protein belongs to the TMA16 family.

This chain is Translation machinery-associated protein 16 homolog, found in Dictyostelium discoideum (Social amoeba).